Reading from the N-terminus, the 475-residue chain is Ribosomal RNA small subunit methyltransferase F (475 aa).

S-adenosyl-L-methionine contacts are provided by residues 125-131 (AAAPGSK), Glu-149, Asp-176, and Asp-194. Cys-247 acts as the Nucleophile in catalysis.

This sequence belongs to the class I-like SAM-binding methyltransferase superfamily. RsmB/NOP family.

Its subcellular location is the cytoplasm. The enzyme catalyses cytidine(1407) in 16S rRNA + S-adenosyl-L-methionine = 5-methylcytidine(1407) in 16S rRNA + S-adenosyl-L-homocysteine + H(+). Specifically methylates the cytosine at position 1407 (m5C1407) of 16S rRNA. This is Ribosomal RNA small subunit methyltransferase F from Aeromonas hydrophila subsp. hydrophila (strain ATCC 7966 / DSM 30187 / BCRC 13018 / CCUG 14551 / JCM 1027 / KCTC 2358 / NCIMB 9240 / NCTC 8049).